A 118-amino-acid polypeptide reads, in one-letter code: Cell division protein FtsB (118 aa).

The Cytoplasmic portion of the chain corresponds to 1–6 (MRNWRW). A helical transmembrane segment spans residues 7 to 24 (LLLVLAALLAWLQHRFWF). The Periplasmic segment spans residues 25–118 (GPGNSGEVRM…DLSQPRREKR (94 aa)). Residues 30–66 (GEVRMLQVQIVQQHQENERLRQRNASLAAEVKNLKDG) adopt a coiled-coil conformation. Residues 98 to 118 (LPNDTSADHGVDLSQPRREKR) are disordered. Positions 103-118 (SADHGVDLSQPRREKR) are enriched in basic and acidic residues.

The protein belongs to the FtsB family. In terms of assembly, part of a complex composed of FtsB, FtsL and FtsQ.

The protein resides in the cell inner membrane. Its function is as follows. Essential cell division protein. May link together the upstream cell division proteins, which are predominantly cytoplasmic, with the downstream cell division proteins, which are predominantly periplasmic. The sequence is that of Cell division protein FtsB from Xylella fastidiosa (strain M23).